Consider the following 319-residue polypeptide: Ferrochelatase (319 aa).

Residues His192 and Glu271 each coordinate Fe cation.

Belongs to the ferrochelatase family.

Its subcellular location is the cytoplasm. The enzyme catalyses heme b + 2 H(+) = protoporphyrin IX + Fe(2+). The protein operates within porphyrin-containing compound metabolism; protoheme biosynthesis; protoheme from protoporphyrin-IX: step 1/1. In terms of biological role, catalyzes the ferrous insertion into protoporphyrin IX. This chain is Ferrochelatase, found in Geotalea daltonii (strain DSM 22248 / JCM 15807 / FRC-32) (Geobacter daltonii).